The primary structure comprises 89 residues: Small ribosomal subunit protein bS20 (89 aa).

Residues 1–21 form a disordered region; that stretch reads MANSAQAKKRARQNVKARKHN. The segment covering 7–21 has biased composition (basic residues); the sequence is AKKRARQNVKARKHN.

The protein belongs to the bacterial ribosomal protein bS20 family.

Its function is as follows. Binds directly to 16S ribosomal RNA. The chain is Small ribosomal subunit protein bS20 from Acinetobacter baylyi (strain ATCC 33305 / BD413 / ADP1).